Reading from the N-terminus, the 282-residue chain is Succinate dehydrogenase [ubiquinone] iron-sulfur subunit, mitochondrial (282 aa).

A mitochondrion-targeting transit peptide spans 1-21; that stretch reads MLRGSTSVCRSLELVTQAARY. The 91-residue stretch at 39 to 129 folds into the 2Fe-2S ferredoxin-type domain; the sequence is EIYRFNPEEP…TTKIYPLPHM (91 aa). [2Fe-2S] cluster-binding residues include cysteine 89, cysteine 94, cysteine 97, and cysteine 109. The region spanning 172–202 is the 4Fe-4S ferredoxin-type domain; sequence EQEKLDGLYECILCACCSASCPSYWWNADKY. Residues cysteine 182, cysteine 185, and cysteine 188 each coordinate [4Fe-4S] cluster. Cysteine 192 serves as a coordination point for [3Fe-4S] cluster. Tryptophan 197 provides a ligand contact to a rhodoquinol. Tryptophan 197 provides a ligand contact to a ubiquinone. Residues cysteine 239 and cysteine 245 each coordinate [3Fe-4S] cluster. Cysteine 249 contributes to the [4Fe-4S] cluster binding site.

Belongs to the succinate dehydrogenase/fumarate reductase iron-sulfur protein family. As to quaternary structure, component of the mitochondrial electron transport chain complex II composed of four subunits: a flavoprotein (Fp), an iron-sulfur protein (Ip), and a large cytochrome b (CybL) subunit and a small cytochrome b (CybS) subunit. There are 2 developmental stage-specific forms of complex II which have the Ip and CybL subunits in common. Complex II from the free-living larvae (aerobic environment) acts as a succinate dehydrogenase and is composed of the common subunit Ip and CybL and the stage specific subunits FpL and CybSL. Complex II from parasitic larvae and adults (anaerobic environment) acts as a fumarate reductase and is composed of the common subunit Ip and CybL and the stage specific subunits FpA and CybSA. The cofactor is [2Fe-2S] cluster. [3Fe-4S] cluster is required as a cofactor. It depends on [4Fe-4S] cluster as a cofactor. Expressed in adult muscles (at protein level).

It localises to the mitochondrion inner membrane. The catalysed reaction is a ubiquinone + succinate = a ubiquinol + fumarate. The enzyme catalyses a rhodoquinone + succinate = a rhodoquinol + fumarate. Its pathway is carbohydrate metabolism; tricarboxylic acid cycle; fumarate from succinate (eukaryal route): step 1/1. Its activity is regulated as follows. Inhibited by the fungicide flutolanil. Functionally, iron-sulfur protein (Ip) subunit of the mitochondrial electron transport chain complex II which, together with the flavoprotein (Fp) subunit forms the catalytic core of the complex. During the free-living egg-larvae stages, which occur in an aerobic environment, complex II acts as a succinate dehydrogenase by transferring electrons from succinate to ubiquinone. During the parasitic larvae and adult stages, which occur in an anaerobic environment, complex II acts as a fumarate reductase by transferring electrons from rhodoquinol to fumarate. The chain is Succinate dehydrogenase [ubiquinone] iron-sulfur subunit, mitochondrial from Ascaris suum (Pig roundworm).